Consider the following 77-residue polypeptide: Omega-conotoxin-like SO-5 (77 aa).

Residues 1–22 (MKLTCVMIVAVLLLTACQLITA) form the signal peptide. The propeptide occupies 23 to 42 (DDSRGTQKHRSLRSTTKVSK). 3 cysteine pairs are disulfide-bonded: cysteine 46–cysteine 61, cysteine 53–cysteine 64, and cysteine 60–cysteine 71.

Belongs to the conotoxin O1 superfamily. In terms of tissue distribution, expressed by the venom duct.

Its subcellular location is the secreted. Omega-conotoxins act at presynaptic membranes, they bind and block voltage-gated calcium channels (Cav). This Conus striatus (Striated cone) protein is Omega-conotoxin-like SO-5 (SO5).